The sequence spans 1184 residues: von Willebrand factor A domain-containing protein 3A (1184 aa).

Positions 1 to 24 are cleaved as a signal peptide; that stretch reads MKKYRKISIGCFAMATQTSHVFHG. Residues 40 to 62 form a disordered region; it reads GRDSKKPLKQKNMNGLGQNSDNG. Over residues 50–62 the composition is skewed to polar residues; the sequence is KNMNGLGQNSDNG. Positions 333–357 form a coiled coil; the sequence is TSRDMDELLAEIQKAQSLLSHVQAL. In terms of domain architecture, VWFA 1 spans 511-708; that stretch reads RVVVLLDISA…SIMSEMEKAL (198 aa). Asn709 carries N-linked (GlcNAc...) asparagine glycosylation. The tract at residues 729 to 780 is disordered; that stretch reads LGSSALPKEKPKTLQLRSQPKKLCPPRPTVPLGARMSIKDDPDREKSPPLKS. Residues 765–776 show a composition bias toward basic and acidic residues; it reads SIKDDPDREKSP. In terms of domain architecture, VWFA 2 spans 959–1131; the sequence is KVCILLDTSG…KIHSLLTKGF (173 aa).

The protein localises to the secreted. The sequence is that of von Willebrand factor A domain-containing protein 3A (VWA3A) from Homo sapiens (Human).